The following is a 161-amino-acid chain: Endoribonuclease YbeY (161 aa).

Zn(2+) contacts are provided by His121, His125, and His131.

Belongs to the endoribonuclease YbeY family. Zn(2+) is required as a cofactor.

It is found in the cytoplasm. Single strand-specific metallo-endoribonuclease involved in late-stage 70S ribosome quality control and in maturation of the 3' terminus of the 16S rRNA. This is Endoribonuclease YbeY from Stenotrophomonas maltophilia (strain R551-3).